A 570-amino-acid polypeptide reads, in one-letter code: Transmembrane 7 superfamily member 3 (570 aa).

The first 21 residues, 1 to 21, serve as a signal peptide directing secretion; that stretch reads MGFLQLLVVAVLASEHRVAGA. N-linked (GlcNAc...) asparagine glycans are attached at residues asparagine 27, asparagine 61, asparagine 75, asparagine 87, and asparagine 264. 7 helical membrane-spanning segments follow: residues 296 to 313, 320 to 342, 347 to 369, 371 to 393, 408 to 430, 437 to 459, and 479 to 501; these read VFFTLFALLGFFICFFGH, LFFIGFIIMGFFFYILITRLTPI, NLILTAVTGSVGGMFLVAVWWRF, ILSICMLCVGLVLGFLISSVTFF, FWVTFSCIAILIPVVFMGCLRIL, VIGSYSVVLAIDSYWSTSLSYIT, and PFQTNDFIILAVWGMLAVSGITL.

In terms of tissue distribution, widely expressed. Highly expressed in kidney and pancreas.

Its subcellular location is the cell membrane. Its function is as follows. Involved in the inhibition of cytokine-induced death of pancreatic beta cells. Involved in the promotion of insulin secretion from pancreatic beta cells. Is a downstream transcriptional target of p53/TP53, and acts as a pro-survival homeostatic factor that attenuates the development of cellular stress. Maintains protein homeostasis and promotes cell survival through attenuation of endoplasmic reticulum (ER) stress and the subsequent induction of unfolded protein response (UPR). This is Transmembrane 7 superfamily member 3 (TM7SF3) from Homo sapiens (Human).